A 151-amino-acid chain; its full sequence is Large ribosomal subunit protein uL15 (151 aa).

The tract at residues glycine 37–glutamine 57 is disordered.

The protein belongs to the universal ribosomal protein uL15 family. In terms of assembly, part of the 50S ribosomal subunit.

Binds to the 23S rRNA. This is Large ribosomal subunit protein uL15 from Prochlorococcus marinus (strain MIT 9313).